We begin with the raw amino-acid sequence, 625 residues long: Ankyrin repeat domain-containing protein oryK (625 aa).

ANK repeat units lie at residues 1 to 27, 31 to 60, 62 to 89, 90 to 119, 162 to 195, 202 to 232, 500 to 530, 534 to 562, and 568 to 598; these read MDIYEAASQGRIDAIKFAVEQGCDVDG, DGKTPLWFAVQSGQPEACRFLMSLGAGRGP, NPSLLEVAVGGGYADIVALLWPHCNAER, EHRSLKTAISLGFHEIADFLIETGAFEYQD, FFDYALLLATKAGRNAGLRLVEFLLGESMPDVNC, QFETPLTAAAEKGNLEILATLIDHPNIDLTI, DTRCPLSWAAKSHNAPLVNALLRSPQVNVNF, SDRTPLLYAIAVNDRPIVERLLNHRDIDL, and EGRTAIFYAAQGGDLSIVQLLIGTQNVDFSI.

It functions in the pathway secondary metabolite biosynthesis. In terms of biological role, ankyrin repeat domain-containing protein; part of the gene cluster that mediates the biosynthesis of oryzines, natural products with an unusual maleidride backbone. The two subunits of the fungal fatty acid synthase oryfasA and oryfasB probably form octenoic acid. This fatty acid is most likely activated by the acyl-CoA ligase oryP to give octenyl-CoA before the citrate synthase-like protein oryE catalyzes condensation with oxaloacetate to form tricarboxylic acid. The next steps of the pathways are conjectural, but a favorite possible route has been proposed, beginning with decarboxylation and concomitant dehydration by the decarboxylase oryM, followed by tautomerization, which may lead to the production of a diene intermediate. Reduction of this diene intermediate could give the known metabolite piliformic acid. On the pathway to oryzine B and oryzine A, however, hydroxylation of the diene by the alpha-ketoglutarate-dependent dioxygenase oryG and lactonisation by the lactonohydrolases oryH or oryL could give oryzine B directly. Finally, enoyl reduction by the dehydrogenase oryD would then convert oryzine B into oryzine A. This chain is Ankyrin repeat domain-containing protein oryK, found in Aspergillus oryzae (strain ATCC 42149 / RIB 40) (Yellow koji mold).